We begin with the raw amino-acid sequence, 193 residues long: Capsid protein (193 aa).

Its subcellular location is the virion. The chain is Capsid protein from Apple chlorotic leaf spot virus (isolate apple) (ACLSV).